The chain runs to 291 residues: uncharacterized protein (291 aa).

Disordered stretches follow at residues Ser29 to Ser50 and Arg168 to Lys291. Position 50 is a phosphoserine (Ser50). Composition is skewed to polar residues over residues Asn176–Pro186 and Gln205–Ile217. Residues Tyr221 to Thr237 are compositionally biased toward basic and acidic residues. The span at Ser280–Lys291 shows a compositional bias: polar residues.

This is an uncharacterized protein from Mus musculus (Mouse).